An 841-amino-acid polypeptide reads, in one-letter code: MIPRIRLAVATIPAMAFLSCLRSESWDPCVQVVPNISYQCMELNFYKIPDNIPTSVKILDLSFNYLSHLDSNSFSSFPELQVLDLSRCEIQTIDDDAYQGLNYLSTLILTGNPIQSLALGAFSGLPSLQKLVAVETNLASLEDFPIGHLKTLNELNVAHNHIHSFKLPEYFSNLPNLEHLDLSKNKIENIYHEHLQVLHQVPLHNLSLDLSLNPLNFIEPGAFNKIRLNGLTLRSNFNSSDVMKTCIQGLAGSKVNQLVLGEFKNERNLESFDKSVLEELCNLTLEQFRIAHFGEFPDDVSDLFNCLANASVISLLSLNLHGLEALPNDFRWQHLEVVNCKLQQFPALKFNSLKKFVFKDNKHMHTFTEINLPNLQFLDLSGNHLSFKGCCSHNEFGTTKLKHLDLSFNEIITMKSNFMGLEQLEYLDFQHSSLKQANDFSIFLSLRNLHYLDISYTNIHVVFRGIFAGLVSLQTLKMAGNSFQNNLLPDVFTDLTNLILLDLSKCQLEQVSQRAFHSLPRLQVLNMSHNRLLFLDTLPYKPLHSLRILDCSYNLIVASKEQELQHLPRSLAFLNLTKNDFSCACEHQTFLQWVKDQKQLLVGAEQMVCTQPLEMQDLPVLSFRNATCQISEAVISASVLTFLLVSVAGILVYKFYFHLLLFVGCKKYGRGESTYDAFVIYSSQDEDWVRNELVKNLEEGVPPFHLCLHYRDFIPGVAIAANIIQEGFHKSRKVIVVVSQHFIQSRWCIFEYEIAQTWQFLRSHAGIIFIVLQKLEKSLLRQQVELYRLLSRNTYLEWEDSVLGRHIFWRRLKKALLDGKPWSPEGTEDSESNQHDTTAFT.

The signal sequence occupies residues 1-23; sequence MIPRIRLAVATIPAMAFLSCLRS. Topologically, residues 24–632 are extracellular; that stretch reads ESWDPCVQVV…FRNATCQISE (609 aa). Cysteines 29 and 40 form a disulfide. A glycan (N-linked (GlcNAc...) asparagine) is linked at Asn-35. LRR repeat units follow at residues 55 to 76, 79 to 100, 103 to 124, 127 to 148, 151 to 172, 176 to 197, and 205 to 225; these read SVKI…SFSS, ELQV…AYQG, YLST…AFSG, SLQK…PIGH, TLNE…EYFS, NLEH…HLQV, and NLSL…AFNK. N-linked (GlcNAc...) asparagine glycans are attached at residues Asn-205, Asn-238, Asn-282, and Asn-309. Cys-281 and Cys-306 are oxidised to a cystine. LRR repeat units lie at residues 374–395, 400–422, 423–444, 448–469, 472–495, 497–518, 521–542, and 545–568; these read NLQF…SHNE, KLKH…MGLE, QLEY…SIFL, NLHY…IFAG, SLQT…FTDL, NLIL…AFHS, RLQV…PYKP, and SLRI…QHLP. Cysteines 390 and 391 form a disulfide. Asn-526 is a glycosylation site (N-linked (GlcNAc...) asparagine). Asn-575 carries an N-linked (GlcNAc...) asparagine glycan. Positions 579-630 constitute an LRRCT domain; the sequence is NDFSCACEHQTFLQWVKDQKQLLVGAEQMVCTQPLEMQDLPVLSFRNATCQI. Intrachain disulfides connect Cys-583–Cys-609 and Cys-585–Cys-628. Asn-625 carries N-linked (GlcNAc...) asparagine glycosylation. The chain crosses the membrane as a helical span at residues 633–653; it reads AVISASVLTFLLVSVAGILVY. Residues 654–841 are Cytoplasmic-facing; the sequence is KFYFHLLLFV…SNQHDTTAFT (188 aa). The region spanning 673–816 is the TIR domain; the sequence is STYDAFVIYS…IFWRRLKKAL (144 aa).

This sequence belongs to the Toll-like receptor family. In terms of assembly, belongs to the lipopolysaccharide (LPS) receptor, a multi-protein complex containing at least CD14, LY96 and TLR4. Binding to bacterial LPS leads to homodimerization. Interacts with LY96 via the extracellular domain. Interacts with MYD88 and TIRAP via their respective TIR domains. Interacts with NOX4. Interacts with CNPY3 and HSP90B1; this interaction is required for proper folding in the endoplasmic reticulum. Interacts with MAP3K21; this interaction leads to negative regulation of TLR4 signaling. Interacts with CD36, following CD36 stimulation by oxLDL or amyloid-beta 42, and forms a heterodimer with TLR6. The trimeric complex is internalized and triggers inflammatory response. LYN kinase activity facilitates TLR4-TLR6 heterodimerization and signal initiation. Interacts with TICAM1 in response to LPS in a WDFY1-dependent manner. Interacts with WDFY1 in response to LPS. Interacts with SMPDL3B. Interacts with CEACAM1; upon lipopolysaccharide stimulation, forms a complex including TLR4 and the phosphorylated form of SYK and CEACAM1, which in turn, recruits PTPN6 that dephosphorylates SYK, reducing the production of reactive oxygen species (ROS) and lysosome disruption, which in turn, reduces the activity of the inflammasome. Interacts with RFTN1; the interaction occurs in response to lipopolysaccharide stimulation. Interacts with SCIMP; the interaction occurs in response to lipopolysaccharide stimulation and is enhanced by phosphorylation of SCIMP by LYN. This interaction facilitates the phosphorylation of TLR4 by LYN which elicits a selective cytokine response in macrophages. Interacts with TRAF3IP3. Interacts with TREM1; this interaction enhances TLR4-mediated inflammatory response. Interacts with ZG16B/PAUF. Interacts with CD82; this interaction inhibits TLR4-mediated signaling pathway. Phosphorylated on tyrosine residues by LYN after binding lipopolysaccharide. Post-translationally, ubiquitinated by RNF128 via 'Lys-28'-linked polyubiquitin chains, leading to proteasomal degradation.

It localises to the cell membrane. The protein resides in the early endosome. The protein localises to the cell projection. It is found in the ruffle. Its function is as follows. Transmembrane receptor that functions as a pattern recognition receptor recognizing pathogen- and damage-associated molecular patterns (PAMPs and DAMPs) to induce innate immune responses via downstream signaling pathways. At the plasma membrane, cooperates with LY96 to mediate the innate immune response to bacterial lipopolysaccharide (LPS). Also involved in LPS-independent inflammatory responses triggered by free fatty acids, such as palmitate, and Ni(2+). Mechanistically, acts via MYD88, TIRAP and TRAF6, leading to NF-kappa-B activation, cytokine secretion and the inflammatory response. Alternatively, CD14-mediated TLR4 internalization via endocytosis is associated with the initiation of a MYD88-independent signaling via the TICAM1-TBK1-IRF3 axis leading to type I interferon production. In addition to the secretion of proinflammatory cytokines, initiates the activation of NLRP3 inflammasome and formation of a positive feedback loop between autophagy and NF-kappa-B signaling cascade. In complex with TLR6, promotes inflammation in monocytes/macrophages by associating with TLR6 and the receptor CD86. Upon ligand binding, such as oxLDL or amyloid-beta 42, the TLR4:TLR6 complex is internalized and triggers inflammatory response, leading to NF-kappa-B-dependent production of CXCL1, CXCL2 and CCL9 cytokines, via MYD88 signaling pathway, and CCL5 cytokine, via TICAM1 signaling pathway. In myeloid dendritic cells, vesicular stomatitis virus glycoprotein G but not LPS promotes the activation of IRF7, leading to type I IFN production in a CD14-dependent manner. This Sus scrofa (Pig) protein is Toll-like receptor 4 (TLR4).